Reading from the N-terminus, the 344-residue chain is Phenylalanine--tRNA ligase alpha subunit (344 aa).

Glutamate 257 provides a ligand contact to Mg(2+).

The protein belongs to the class-II aminoacyl-tRNA synthetase family. Phe-tRNA synthetase alpha subunit type 1 subfamily. As to quaternary structure, tetramer of two alpha and two beta subunits. Mg(2+) serves as cofactor.

The protein localises to the cytoplasm. It carries out the reaction tRNA(Phe) + L-phenylalanine + ATP = L-phenylalanyl-tRNA(Phe) + AMP + diphosphate + H(+). The sequence is that of Phenylalanine--tRNA ligase alpha subunit from Chlorobium chlorochromatii (strain CaD3).